Here is a 134-residue protein sequence, read N- to C-terminus: Ribonuclease P protein component (134 aa).

It belongs to the RnpA family. Consists of a catalytic RNA component (M1 or rnpB) and a protein subunit.

The enzyme catalyses Endonucleolytic cleavage of RNA, removing 5'-extranucleotides from tRNA precursor.. Its function is as follows. RNaseP catalyzes the removal of the 5'-leader sequence from pre-tRNA to produce the mature 5'-terminus. It can also cleave other RNA substrates such as 4.5S RNA. The protein component plays an auxiliary but essential role in vivo by binding to the 5'-leader sequence and broadening the substrate specificity of the ribozyme. The protein is Ribonuclease P protein component of Ectopseudomonas mendocina (strain ymp) (Pseudomonas mendocina).